The chain runs to 478 residues: Trigger factor (478 aa).

Residues 154-167 (MAKDSRSFEPREEG) are compositionally biased toward basic and acidic residues. Disordered regions lie at residues 154–173 (MAKD…AQSG) and 444–478 (LFAE…KAAG). The region spanning 173–258 (GDRVTIDFVG…VKAVAAPGET (86 aa)) is the PPIase FKBP-type domain.

The protein belongs to the FKBP-type PPIase family. Tig subfamily.

The protein localises to the cytoplasm. It carries out the reaction [protein]-peptidylproline (omega=180) = [protein]-peptidylproline (omega=0). Its function is as follows. Involved in protein export. Acts as a chaperone by maintaining the newly synthesized protein in an open conformation. Functions as a peptidyl-prolyl cis-trans isomerase. This Methylorubrum populi (strain ATCC BAA-705 / NCIMB 13946 / BJ001) (Methylobacterium populi) protein is Trigger factor.